An 81-amino-acid chain; its full sequence is Small ribosomal subunit protein bS16 (81 aa).

This sequence belongs to the bacterial ribosomal protein bS16 family.

The sequence is that of Small ribosomal subunit protein bS16 from Colwellia psychrerythraea (strain 34H / ATCC BAA-681) (Vibrio psychroerythus).